The chain runs to 351 residues: MLLILLSVALLALSSAQSLNEDVSQEESPSVISGKPEGRRPQGGNQPQRTPPPPGKPEGRPPQGGNQSQGPPPRPGKPEGPPPQGGNQSQGPPPRPGKPEGQPPQGGNQSQGPPPRPGKPEGPPPQGGNQSQGPPPRPGKPEGPPPQGGNQSQGPPPRPGKPEGPPPQGGNQSQGPPPHPGKPEGPPPQGGNQSQGPPPRPGKPEGPPPQGGNQSQGPPPRPGKPEGPPPQGGNKPQGPPPRPGKPEGPPPQGGNQSQGPPPRPGKPEGPPSQGGNKPQGPPPHPGKPQGPPPQEGNKPQRPPPPGRPQGPPPPGGNPQQPLPPPAGKPQGPPPPPQGGRPHRPPQGQPPQ.

Residues 1–16 (MLLILLSVALLALSSA) form the signal peptide. A Pyrrolidone carboxylic acid modification is found at glutamine 17. The tract at residues 17–351 (QSLNEDVSQE…HRPPQGQPPQ (335 aa)) is disordered. Over residues 20 to 31 (NEDVSQEESPSV) the composition is skewed to polar residues. Phosphoserine is present on serine 24. A run of 12 repeats spans residues 53 to 73 (PPGK…GPPP), 74 to 94 (RPGK…GPPP), 95 to 115 (RPGK…GPPP), 116 to 136 (RPGK…GPPP), 137 to 157 (RPGK…GPPP), 158 to 178 (RPGK…GPPP), 179 to 199 (HPGK…GPPP), 200 to 220 (RPGK…GPPP), 221 to 241 (RPGK…GPPP), 242 to 261 (RPGK…QGPP), 263 to 283 (RPGK…GPPP), and 284 to 304 (HPGK…RPPP). Positions 53 to 304 (PPGKPEGRPP…EGNKPQRPPP (252 aa)) are 12 X 21 AA tandem repeats of [RHP]-P-G-K-P-[EQ]-G-[PQS]-P-[PS]-Q-[GE]-G-N-[QK]-[SP]-[QR]-[GR]-P-P-P. The N-linked (GlcNAc...) asparagine glycan is linked to asparagine 66. The span at 70 to 84 (GPPPRPGKPEGPPPQ) shows a compositional bias: pro residues. An N-linked (GlcNAc...) asparagine glycan is attached at asparagine 87. An O-linked (Hex) serine glycan is attached at serine 89. Residues 99–111 (PEGQPPQGGNQSQ) are compositionally biased toward low complexity. The N-linked (GlcNAc...) asparagine glycan is linked to asparagine 108. Residues 112–126 (GPPPRPGKPEGPPPQ) are compositionally biased toward pro residues. Asparagine 129 is a glycosylation site (N-linked (GlcNAc...) asparagine). A compositionally biased stretch (pro residues) spans 133-147 (GPPPRPGKPEGPPPQ). Asparagine 150 carries N-linked (GlcNAc...) asparagine glycosylation. 2 stretches are compositionally biased toward pro residues: residues 154-168 (GPPP…PPPQ) and 175-189 (GPPP…PPPQ). Asparagine 192 carries an N-linked (GlcNAc...) asparagine glycan. Over residues 196-210 (GPPPRPGKPEGPPPQ) the composition is skewed to pro residues. N-linked (GlcNAc...) asparagine glycosylation is found at asparagine 213 and asparagine 234. Pro residues-rich tracts occupy residues 217 to 252 (GPPP…PPPQ), 259 to 270 (GPPPRPGKPEGP), and 279 to 351 (QGPP…QPPQ). Asparagine 297 carries an N-linked (Hex) asparagine; atypical glycan.

In terms of processing, N- and O-glycosylated; contains about 50% carbohydrate. This is composed of highly fucosylated N-linked saccharides, the major structure is a biantennary asialosaccharide containing 2 fucose residues on one antenna and an unsubstituted terminal lactosamine sequence on the other. The Gram-negative bacterium F.nucleatum binds to carbohydrates containing unsubstituted GalBeta1,4GlcNAc residues. N-glycosylation on Asn-87 is prevalent in head and neck cancer patients. Post-translationally, proteolytically cleaved at the tripeptide Xaa-Pro-Gln, where Xaa in the P(3) position is mostly lysine. The endoprotease may be of microbial origin. Besides on the N-terminal of mature PRB3, pyroglutamate formation found on at least Gln-67, Gln-88, Gln-256 and Gln-337.

It localises to the secreted. Its function is as follows. Acts as a receptor for the Gram-negative bacterium F.nucleatum. In Homo sapiens (Human), this protein is Basic salivary proline-rich protein 3 (PRB3).